We begin with the raw amino-acid sequence, 120 residues long: Ribosome-binding factor A (120 aa).

It belongs to the RbfA family. In terms of assembly, monomer. Binds 30S ribosomal subunits, but not 50S ribosomal subunits or 70S ribosomes.

It is found in the cytoplasm. One of several proteins that assist in the late maturation steps of the functional core of the 30S ribosomal subunit. Associates with free 30S ribosomal subunits (but not with 30S subunits that are part of 70S ribosomes or polysomes). Required for efficient processing of 16S rRNA. May interact with the 5'-terminal helix region of 16S rRNA. This chain is Ribosome-binding factor A, found in Buchnera aphidicola subsp. Acyrthosiphon pisum (strain 5A).